The chain runs to 122 residues: Photosystem II extrinsic protein U (122 aa).

Positions 1–30 are cleaved as a signal peptide; that stretch reads MRWLLSILVRVVLVLCLCFAPLGIPVVARA.

It belongs to the PsbU family. In terms of assembly, PSII is composed of 1 copy each of membrane proteins PsbA, PsbB, PsbC, PsbD, PsbE, PsbF, PsbH, PsbI, PsbJ, PsbK, PsbL, PsbM, PsbT, PsbX, PsbY, PsbZ, Psb30/Ycf12, peripheral proteins PsbO, CyanoQ (PsbQ), PsbU, PsbV and a large number of cofactors. It forms dimeric complexes.

The protein resides in the cellular thylakoid membrane. In terms of biological role, one of the extrinsic, lumenal subunits of photosystem II (PSII). PSII is a light-driven water plastoquinone oxidoreductase, using light energy to abstract electrons from H(2)O, generating a proton gradient subsequently used for ATP formation. The extrinsic proteins stabilize the structure of photosystem II oxygen-evolving complex (OEC), the ion environment of oxygen evolution and protect the OEC against heat-induced inactivation. This Synechococcus sp. (strain JA-2-3B'a(2-13)) (Cyanobacteria bacterium Yellowstone B-Prime) protein is Photosystem II extrinsic protein U.